Consider the following 203-residue polypeptide: Holliday junction branch migration complex subunit RuvA (203 aa).

The interval 1–64 (MIGRLRGIIL…EDAQLLYGFN (64 aa)) is domain I. The segment at 65–142 (NKQERTLFKE…KGLHGDLFTP (78 aa)) is domain II. A flexible linker region spans residues 143-154 (AVDLVLTSPASP). The interval 155–203 (GSEDAEQEAVAALVALGYKPQEASRMVSKIARPDASSETLIRDALRAAL) is domain III.

The protein belongs to the RuvA family. As to quaternary structure, homotetramer. Forms an RuvA(8)-RuvB(12)-Holliday junction (HJ) complex. HJ DNA is sandwiched between 2 RuvA tetramers; dsDNA enters through RuvA and exits via RuvB. An RuvB hexamer assembles on each DNA strand where it exits the tetramer. Each RuvB hexamer is contacted by two RuvA subunits (via domain III) on 2 adjacent RuvB subunits; this complex drives branch migration. In the full resolvosome a probable DNA-RuvA(4)-RuvB(12)-RuvC(2) complex forms which resolves the HJ.

It is found in the cytoplasm. Its function is as follows. The RuvA-RuvB-RuvC complex processes Holliday junction (HJ) DNA during genetic recombination and DNA repair, while the RuvA-RuvB complex plays an important role in the rescue of blocked DNA replication forks via replication fork reversal (RFR). RuvA specifically binds to HJ cruciform DNA, conferring on it an open structure. The RuvB hexamer acts as an ATP-dependent pump, pulling dsDNA into and through the RuvAB complex. HJ branch migration allows RuvC to scan DNA until it finds its consensus sequence, where it cleaves and resolves the cruciform DNA. This chain is Holliday junction branch migration complex subunit RuvA, found in Salmonella schwarzengrund (strain CVM19633).